Consider the following 256-residue polypeptide: tRNA pseudouridine synthase A (256 aa).

D55 serves as the catalytic Nucleophile. Y113 contributes to the substrate binding site.

It belongs to the tRNA pseudouridine synthase TruA family. In terms of assembly, homodimer.

It carries out the reaction uridine(38/39/40) in tRNA = pseudouridine(38/39/40) in tRNA. Formation of pseudouridine at positions 38, 39 and 40 in the anticodon stem and loop of transfer RNAs. The polypeptide is tRNA pseudouridine synthase A (Limosilactobacillus reuteri (strain DSM 20016) (Lactobacillus reuteri)).